Here is a 434-residue protein sequence, read N- to C-terminus: Glutamyl-tRNA reductase (434 aa).

Residues 49-52 (TCNR), serine 109, 114-116 (EPQ), and glutamine 120 contribute to the substrate site. The active-site Nucleophile is cysteine 50. Residue 189–194 (GAGEMA) participates in NADP(+) binding.

Belongs to the glutamyl-tRNA reductase family. In terms of assembly, homodimer.

The catalysed reaction is (S)-4-amino-5-oxopentanoate + tRNA(Glu) + NADP(+) = L-glutamyl-tRNA(Glu) + NADPH + H(+). The protein operates within porphyrin-containing compound metabolism; protoporphyrin-IX biosynthesis; 5-aminolevulinate from L-glutamyl-tRNA(Glu): step 1/2. Functionally, catalyzes the NADPH-dependent reduction of glutamyl-tRNA(Glu) to glutamate 1-semialdehyde (GSA). This Desulfatibacillum aliphaticivorans protein is Glutamyl-tRNA reductase.